The following is a 324-amino-acid chain: Homeobox protein Nkx-2.5 (324 aa).

Positions 138–197 (RRKPRVLFSQAQVYELERRFKQQRYLSAPERDQLASVLKLTSTQVKIWFQNRRYKCKRQR) form a DNA-binding region, homeobox.

It belongs to the NK-2 homeobox family. In terms of assembly, homodimer (via the homeobox); binds DNA as homodimer. Interacts (via the homeobox) with TBX5 (via the T-box); this complex binds DNA. Interacts with HIPK1 and HIPK2, but not HIPK3. Interacts with the C-terminal zinc finger of GATA4 through its homeobox domain. Also interacts with JARID2 which represses its ability to activate transcription of ANF. Interacts with FBLIM1. Interacts with TBX18. Interacts with histone methyltransferase NSD2 (via HMG box). Interacts with NEDD9. Interacts with TBX1. As to expression, expressed only in the heart.

It is found in the nucleus. Its function is as follows. Transcription factor required for the development of the heart and the spleen. During heart development, acts as a transcriptional activator of NPPA/ANF in cooperation with GATA4. May cooperate with TBX2 to negatively modulate expression of NPPA/ANF in the atrioventricular canal. Binds to the core DNA motif of NPPA promoter. Together with PBX1, required for spleen development through a mechanism that involves CDKN2B repression. Positively regulates transcription of genes such as COL3A1 and MMP2, resulting in increased pulmonary endothelial fibrosis in response to hypoxia. This Homo sapiens (Human) protein is Homeobox protein Nkx-2.5 (NKX2-5).